The chain runs to 393 residues: Formate-dependent phosphoribosylglycinamide formyltransferase (393 aa).

N(1)-(5-phospho-beta-D-ribosyl)glycinamide is bound by residues 22 to 23 and Glu82; that span reads EL. Residues Arg114, Lys155, 160–165, 195–198, and Glu203 each bind ATP; these read SSGHGQ and EGFI. An ATP-grasp domain is found at 119–308; the sequence is RLAAEELGLP…QFALHARAIL (190 aa). 2 residues coordinate Mg(2+): Glu267 and Glu279. N(1)-(5-phospho-beta-D-ribosyl)glycinamide is bound by residues Asp286, Lys356, and 363 to 364; that span reads RR.

This sequence belongs to the PurK/PurT family. Homodimer.

The enzyme catalyses N(1)-(5-phospho-beta-D-ribosyl)glycinamide + formate + ATP = N(2)-formyl-N(1)-(5-phospho-beta-D-ribosyl)glycinamide + ADP + phosphate + H(+). It participates in purine metabolism; IMP biosynthesis via de novo pathway; N(2)-formyl-N(1)-(5-phospho-D-ribosyl)glycinamide from N(1)-(5-phospho-D-ribosyl)glycinamide (formate route): step 1/1. Its function is as follows. Involved in the de novo purine biosynthesis. Catalyzes the transfer of formate to 5-phospho-ribosyl-glycinamide (GAR), producing 5-phospho-ribosyl-N-formylglycinamide (FGAR). Formate is provided by PurU via hydrolysis of 10-formyl-tetrahydrofolate. The protein is Formate-dependent phosphoribosylglycinamide formyltransferase of Haemophilus ducreyi (strain 35000HP / ATCC 700724).